The following is a 417-amino-acid chain: NADH-dependent phenylglyoxylate dehydrogenase subunit alpha (417 aa).

In terms of assembly, dimer of heteropentamers composed of an alpha (PadG), a beta (PadI), a gamma (PadE), a delta (PadF) and an epsilon (PadH) subunit.

It carries out the reaction phenylglyoxylate + NAD(+) + CoA = benzoyl-CoA + CO2 + NADH. Activated by magnesium ions and thiamine diphosphate. Functionally, involved in the anaerobic metabolism of phenylalanine and phenylacetate. Catalyzes the oxidative decarboxylation of phenylglyoxylate to benzoyl-CoA and CO(2). It can also react slowly with 2-oxo-3-methylbutanoate and use different electron acceptors such as benzyl viologen, methyl viologen, FAD or FMN, but NAD seems to be the physiological electron acceptor. Also catalyzes an isotope exchange between CO(2) and the carboxyl group which proves partial or complete reversibility of the oxidative decarboxylation reaction. The sequence is that of NADH-dependent phenylglyoxylate dehydrogenase subunit alpha (padG) from Aromatoleum evansii (Azoarcus evansii).